We begin with the raw amino-acid sequence, 347 residues long: Transcription factor EC (347 aa).

A necessary for transcriptional transactivation region spans residues 1–119 (MTLDHQIINP…GLTSASCPSS (119 aa)). Residues 139-192 (QKKDNHNLIERRRRYNINYRIKELGTLIPKSNDPDMRWNKGTILKASVEYIKWL) enclose the bHLH domain. The necessary for transcriptional transactivation stretch occupies residues 271–347 (PSPELCDQAI…SFSSDDGDEL (77 aa)). The disordered stretch occupies residues 319–347 (DPLLSATSPAVSKESSRRSSFSSDDGDEL). Low complexity predominate over residues 326–341 (SPAVSKESSRRSSFSS).

It belongs to the MiT/TFE family. As to quaternary structure, homodimer. Forms heterodimers with TFE3. Forms heterodimers with MITF. Interacts with MITF. As to expression, expressed moderately in spleen, kidney, bone marrow, small intestine and leukocytes. Expressed weakly in testis, trachea and colon.

The protein localises to the nucleus. Transcriptional regulator that acts as a repressor or an activator. Acts as a transcriptional repressor on minimal promoter containing element F (that includes an E-box sequence). Binds to element F in an E-box sequence-specific manner. Acts as a transcriptional transactivator on the proximal promoter region of the tartrate-resistant acid phosphatase (TRAP) E-box containing promoter. Collaborates with MITF in target gene activation. Acts as a transcriptional repressor on minimal promoter containing mu E3 enhancer sequence. Binds to mu E3 DNA sequence of the immunoglobulin heavy-chain gene enhancer. Binds DNA in a homo- or heterodimeric form. The protein is Transcription factor EC (TFEC) of Homo sapiens (Human).